Consider the following 62-residue polypeptide: Short neurotoxin C (62 aa).

The segment covering 1-16 has biased composition (polar residues); the sequence is RRCFNQQSSQPQTNKS. The interval 1–21 is disordered; the sequence is RRCFNQQSSQPQTNKSCPPGE. Intrachain disulfides connect Cys-3–Cys-24, Cys-17–Cys-41, Cys-43–Cys-54, and Cys-55–Cys-60.

The protein belongs to the three-finger toxin family. Short-chain subfamily. Type I alpha-neurotoxin sub-subfamily. As to expression, expressed by the venom gland.

It is found in the secreted. Binds to muscle nicotinic acetylcholine receptor (nAChR) and inhibit acetylcholine from binding to the receptor, thereby impairing neuromuscular transmission. The chain is Short neurotoxin C from Laticauda crockeri (Crocker's sea snake).